Consider the following 662-residue polypeptide: Serine/threonine kinase-like domain-containing protein STKLD1 (662 aa).

One can recognise a Protein kinase domain in the interval 1–202 (MLNPGALGVN…ILDMATCSFL (202 aa)). ATP contacts are provided by residues 2-10 (LNPGALGVN) and K25. Residues 639-662 (LQEDQLEPPAGQEAPLQGEPLFRP) are disordered.

Belongs to the protein kinase superfamily. Ser/Thr protein kinase family. STKL subfamily.

This is Serine/threonine kinase-like domain-containing protein STKLD1 (Stkld1) from Mus musculus (Mouse).